A 475-amino-acid polypeptide reads, in one-letter code: Ankyrin repeat, SAM and basic leucine zipper domain-containing protein 1 (475 aa).

The tract at residues 1 to 24 (MAGSLGNLVVAGGGESSDSEEDYW) is disordered. Ser16, Ser17, and Ser19 each carry phosphoserine. ANK repeat units lie at residues 44 to 73 (ERDE…SVES), 77 to 106 (FGWT…NASF), 109 to 146 (DQYT…VACR), 147 to 176 (KCMT…EINA), 180 to 209 (NGYT…NKTI), and 213 to 242 (DGKT…PLQG). The SAM domain maps to 273–336 (TAFGDLEVFL…LDAVKELQVE (64 aa)).

Interacts with DDX4, PIWIL1, RANBP9 and TDRD1.

The protein localises to the cytoplasm. In terms of biological role, plays a central role during spermatogenesis by repressing transposable elements and preventing their mobilization, which is essential for the germline integrity. Acts via the piRNA metabolic process, which mediates the repression of transposable elements during meiosis by forming complexes composed of piRNAs and Piwi proteins and governs the methylation and subsequent repression of transposons. Its association with pi-bodies suggests a participation in the primary piRNAs metabolic process. Required prior to the pachytene stage to facilitate the production of multiple types of piRNAs, including those associated with repeats involved in the regulation of retrotransposons. May act by mediating protein-protein interactions during germ cell maturation. This Notamacropus eugenii (Tammar wallaby) protein is Ankyrin repeat, SAM and basic leucine zipper domain-containing protein 1 (ASZ1).